The sequence spans 226 residues: UPF0758 protein CHY_0341 (226 aa).

Positions 104–226 (NFLNPDDVYN…YISMKAERLF (123 aa)) constitute an MPN domain. H175, H177, and D188 together coordinate Zn(2+). The JAMM motif signature appears at 175–188 (HNHPSGDPTPSKED).

Belongs to the UPF0758 family.

In Carboxydothermus hydrogenoformans (strain ATCC BAA-161 / DSM 6008 / Z-2901), this protein is UPF0758 protein CHY_0341.